We begin with the raw amino-acid sequence, 147 residues long: Ribonuclease P protein component (147 aa).

The interval threonine 117–glutamine 147 is disordered.

The protein belongs to the RnpA family. As to quaternary structure, consists of a catalytic RNA component (M1 or rnpB) and a protein subunit.

It carries out the reaction Endonucleolytic cleavage of RNA, removing 5'-extranucleotides from tRNA precursor.. In terms of biological role, RNaseP catalyzes the removal of the 5'-leader sequence from pre-tRNA to produce the mature 5'-terminus. It can also cleave other RNA substrates such as 4.5S RNA. The protein component plays an auxiliary but essential role in vivo by binding to the 5'-leader sequence and broadening the substrate specificity of the ribozyme. The chain is Ribonuclease P protein component from Thermobifida fusca (strain YX).